The primary structure comprises 173 residues: Thiol-disulfide oxidoreductase ResA (173 aa).

A helical; Signal-anchor for type II membrane protein transmembrane segment spans residues Val-10–Phe-29. In terms of domain architecture, Thioredoxin spans Met-35 to Pro-173. Cys-73 and Cys-76 are disulfide-bonded.

Belongs to the thioredoxin family. ResA subfamily.

The protein localises to the cell membrane. It participates in protein modification; cytochrome c assembly. Functionally, thiol-disulfide oxidoreductase which is required in disulfide reduction during c-type cytochrome synthesis. May accept reducing equivalents from CcdA, leading to breakage of disulfide bonds in apocytochrome c; following this reduction heme can be covalently attached. This Bacillus thuringiensis (strain Al Hakam) protein is Thiol-disulfide oxidoreductase ResA.